Here is a 150-residue protein sequence, read N- to C-terminus: Arginine repressor (150 aa).

It belongs to the ArgR family.

It localises to the cytoplasm. Its pathway is amino-acid biosynthesis; L-arginine biosynthesis [regulation]. Regulates arginine biosynthesis genes. The chain is Arginine repressor from Psychromonas ingrahamii (strain DSM 17664 / CCUG 51855 / 37).